The primary structure comprises 539 residues: Bifunctional purine biosynthesis protein PurH (539 aa).

In terms of domain architecture, MGS-like spans 8-159 (FPIPDLHRVR…KNYAYTGVVT (152 aa)).

The protein belongs to the PurH family.

The enzyme catalyses (6R)-10-formyltetrahydrofolate + 5-amino-1-(5-phospho-beta-D-ribosyl)imidazole-4-carboxamide = 5-formamido-1-(5-phospho-D-ribosyl)imidazole-4-carboxamide + (6S)-5,6,7,8-tetrahydrofolate. It carries out the reaction IMP + H2O = 5-formamido-1-(5-phospho-D-ribosyl)imidazole-4-carboxamide. It participates in purine metabolism; IMP biosynthesis via de novo pathway; 5-formamido-1-(5-phospho-D-ribosyl)imidazole-4-carboxamide from 5-amino-1-(5-phospho-D-ribosyl)imidazole-4-carboxamide (10-formyl THF route): step 1/1. It functions in the pathway purine metabolism; IMP biosynthesis via de novo pathway; IMP from 5-formamido-1-(5-phospho-D-ribosyl)imidazole-4-carboxamide: step 1/1. In Bartonella tribocorum (strain CIP 105476 / IBS 506), this protein is Bifunctional purine biosynthesis protein PurH.